The following is a 519-amino-acid chain: Acetylcholine receptor subunit beta-like 2 (519 aa).

The signal sequence occupies residues 1–18; that stretch reads MWHWSLLCVFLLVPLANS. The Extracellular segment spans residues 19 to 244; the sequence is TAPISFEANP…ITFKLTMRRK (226 aa). A glycan (N-linked (GlcNAc...) asparagine) is linked at asparagine 50. Cysteine 154 and cysteine 168 are joined by a disulfide. The next 3 membrane-spanning stretches (helical) occupy residues 245-269, 277-295, and 311-332; these read TLFY…VFYL, VTLC…LLLA, and YLLF…VLNI. The Cytoplasmic portion of the chain corresponds to 333-462; sequence HFRSPSTHNM…WKFVSMVLDR (130 aa). A helical membrane pass occupies residues 463–481; it reads FFLWLFTLSCVFGTLAIIC.

This sequence belongs to the ligand-gated ion channel (TC 1.A.9) family. Acetylcholine receptor (TC 1.A.9.1) subfamily. As to expression, CNS in embryos.

It is found in the postsynaptic cell membrane. It localises to the cell membrane. After binding acetylcholine, the AChR responds by an extensive change in conformation that affects all subunits and leads to opening of an ion-conducting channel across the plasma membrane. In Drosophila melanogaster (Fruit fly), this protein is Acetylcholine receptor subunit beta-like 2 (nAChRbeta2).